The chain runs to 72 residues: Large ribosomal subunit protein uL29 (72 aa).

It belongs to the universal ribosomal protein uL29 family.

In Thermodesulfovibrio yellowstonii (strain ATCC 51303 / DSM 11347 / YP87), this protein is Large ribosomal subunit protein uL29.